A 713-amino-acid chain; its full sequence is Phosphoribosylformylglycinamidine synthase subunit PurL (713 aa).

H32 is a catalytic residue. Y35 is an ATP binding site. E76 is a binding site for Mg(2+). Substrate is bound by residues 77–80 and R99; that span reads SHNH. H78 acts as the Proton acceptor in catalysis. Position 100 (D100) interacts with Mg(2+). A substrate-binding site is contributed by Q224. D252 contributes to the Mg(2+) binding site. 296 to 298 provides a ligand contact to substrate; that stretch reads ESQ. 2 residues coordinate ATP: D471 and G508. A Mg(2+)-binding site is contributed by N509. Position 511 (S511) interacts with substrate.

This sequence belongs to the FGAMS family. As to quaternary structure, monomer. Part of the FGAM synthase complex composed of 1 PurL, 1 PurQ and 2 PurS subunits.

The protein localises to the cytoplasm. The catalysed reaction is N(2)-formyl-N(1)-(5-phospho-beta-D-ribosyl)glycinamide + L-glutamine + ATP + H2O = 2-formamido-N(1)-(5-O-phospho-beta-D-ribosyl)acetamidine + L-glutamate + ADP + phosphate + H(+). Its pathway is purine metabolism; IMP biosynthesis via de novo pathway; 5-amino-1-(5-phospho-D-ribosyl)imidazole from N(2)-formyl-N(1)-(5-phospho-D-ribosyl)glycinamide: step 1/2. In terms of biological role, part of the phosphoribosylformylglycinamidine synthase complex involved in the purines biosynthetic pathway. Catalyzes the ATP-dependent conversion of formylglycinamide ribonucleotide (FGAR) and glutamine to yield formylglycinamidine ribonucleotide (FGAM) and glutamate. The FGAM synthase complex is composed of three subunits. PurQ produces an ammonia molecule by converting glutamine to glutamate. PurL transfers the ammonia molecule to FGAR to form FGAM in an ATP-dependent manner. PurS interacts with PurQ and PurL and is thought to assist in the transfer of the ammonia molecule from PurQ to PurL. The sequence is that of Phosphoribosylformylglycinamidine synthase subunit PurL from Thermococcus kodakarensis (strain ATCC BAA-918 / JCM 12380 / KOD1) (Pyrococcus kodakaraensis (strain KOD1)).